The following is a 615-amino-acid chain: Fibrinogen alpha chain (615 aa).

An N-terminal signal peptide occupies residues methionine 1–threonine 19. Residues cysteine 71–glycine 602 are a coiled coil. The tract at residues phenylalanine 267–leucine 427 is disordered. The span at glycine 293–proline 302 shows a compositional bias: polar residues. The O-linked (GalNAc...) threonine glycan is linked to threonine 325. The segment covering glycine 373 to glycine 396 has biased composition (low complexity). Cysteine 455 and cysteine 485 are disulfide-bonded. The interval glutamate 530–proline 615 is disordered. Low complexity predominate over residues serine 537–lysine 549. The segment covering glutamine 550–arginine 560 has biased composition (polar residues). The span at glutamine 591–arginine 601 shows a compositional bias: basic residues.

In terms of assembly, heterohexamer; disulfide linked. Contains 2 sets of 3 non-identical chains (alpha, beta and gamma). The 2 heterotrimers are in head to head conformation with the N-termini in a small central domain. In terms of processing, conversion of fibrinogen to fibrin is triggered by thrombin, which cleaves fibrinopeptides A and B from alpha and beta chains, and thus exposes the N-terminal polymerization sites responsible for the formation of the soft clot. The soft clot is converted into the hard clot by factor XIIIA which catalyzes the epsilon-(gamma-glutamyl)lysine cross-linking between gamma chains (stronger) and between alpha chains (weaker) of different monomers. Forms F13A-mediated cross-links between a glutamine and the epsilon-amino group of a lysine residue, forming fibronectin-fibrinogen heteropolymers.

The protein resides in the secreted. Its function is as follows. Cleaved by the protease thrombin to yield monomers which, together with fibrinogen beta (FGB) and fibrinogen gamma (FGG), polymerize to form an insoluble fibrin matrix. Fibrin has a major function in hemostasis as one of the primary components of blood clots. In addition, functions during the early stages of wound repair to stabilize the lesion and guide cell migration during re-epithelialization. Was originally thought to be essential for platelet aggregation, based on in vitro studies using anticoagulated blood. However, subsequent studies have shown that it is not absolutely required for thrombus formation in vivo. Enhances expression of SELP in activated platelets via an ITGB3-dependent pathway. Maternal fibrinogen is essential for successful pregnancy. Fibrin deposition is also associated with infection, where it protects against IFNG-mediated hemorrhage. May also facilitate the immune response via both innate and T-cell mediated pathways. The sequence is that of Fibrinogen alpha chain (FGA) from Bos taurus (Bovine).